Consider the following 785-residue polypeptide: uncharacterized protein (785 aa).

The region spanning 1–93 is the PE domain; sequence MSWVMVSPEL…GGAYAAAEAA (93 aa).

Belongs to the mycobacterial PE family. PGRS subfamily.

This is an uncharacterized protein from Mycobacterium tuberculosis (strain CDC 1551 / Oshkosh).